Here is a 442-residue protein sequence, read N- to C-terminus: 3-phosphoshikimate 1-carboxyvinyltransferase (442 aa).

3-phosphoshikimate is bound by residues Lys-25, Ser-26, and Arg-30. Lys-25 contacts phosphoenolpyruvate. Gly-97 and Arg-125 together coordinate phosphoenolpyruvate. Ser-170, Gln-172, Asp-323, and Lys-350 together coordinate 3-phosphoshikimate. Gln-172 is a phosphoenolpyruvate binding site. Catalysis depends on Asp-323, which acts as the Proton acceptor. Residues Arg-354 and Arg-399 each contribute to the phosphoenolpyruvate site.

Belongs to the EPSP synthase family. As to quaternary structure, monomer.

It localises to the cytoplasm. The catalysed reaction is 3-phosphoshikimate + phosphoenolpyruvate = 5-O-(1-carboxyvinyl)-3-phosphoshikimate + phosphate. It functions in the pathway metabolic intermediate biosynthesis; chorismate biosynthesis; chorismate from D-erythrose 4-phosphate and phosphoenolpyruvate: step 6/7. Catalyzes the transfer of the enolpyruvyl moiety of phosphoenolpyruvate (PEP) to the 5-hydroxyl of shikimate-3-phosphate (S3P) to produce enolpyruvyl shikimate-3-phosphate and inorganic phosphate. The chain is 3-phosphoshikimate 1-carboxyvinyltransferase from Bartonella henselae (strain ATCC 49882 / DSM 28221 / CCUG 30454 / Houston 1) (Rochalimaea henselae).